Here is a 458-residue protein sequence, read N- to C-terminus: Bifunctional protein HldE (458 aa).

The segment at 1–311 (MVNVLVVGDL…ENLKSKKSGF (311 aa)) is ribokinase. Residue 189-192 (NKKE) coordinates ATP. The active site involves aspartate 257. The tract at residues 333–458 (FTNGCFDILH…TTNIINKIKG (126 aa)) is cytidylyltransferase.

This sequence in the N-terminal section; belongs to the carbohydrate kinase PfkB family. The protein in the C-terminal section; belongs to the cytidylyltransferase family. As to quaternary structure, homodimer.

It carries out the reaction D-glycero-beta-D-manno-heptose 7-phosphate + ATP = D-glycero-beta-D-manno-heptose 1,7-bisphosphate + ADP + H(+). It catalyses the reaction D-glycero-beta-D-manno-heptose 1-phosphate + ATP + H(+) = ADP-D-glycero-beta-D-manno-heptose + diphosphate. The protein operates within nucleotide-sugar biosynthesis; ADP-L-glycero-beta-D-manno-heptose biosynthesis; ADP-L-glycero-beta-D-manno-heptose from D-glycero-beta-D-manno-heptose 7-phosphate: step 1/4. Its pathway is nucleotide-sugar biosynthesis; ADP-L-glycero-beta-D-manno-heptose biosynthesis; ADP-L-glycero-beta-D-manno-heptose from D-glycero-beta-D-manno-heptose 7-phosphate: step 3/4. Its function is as follows. Catalyzes the phosphorylation of D-glycero-D-manno-heptose 7-phosphate at the C-1 position to selectively form D-glycero-beta-D-manno-heptose-1,7-bisphosphate. Functionally, catalyzes the ADP transfer from ATP to D-glycero-beta-D-manno-heptose 1-phosphate, yielding ADP-D-glycero-beta-D-manno-heptose. This Campylobacter fetus subsp. fetus (strain 82-40) protein is Bifunctional protein HldE.